We begin with the raw amino-acid sequence, 790 residues long: Protein SEY1 (790 aa).

At 1 to 692 the chain is on the cytoplasmic side; that stretch reads MELSEGELSH…KRSIVQHITQ (692 aa). The GB1/RHD3-type G domain maps to 55 to 284; it reads GNNYHIISVF…VSNELFKPEY (230 aa). 65 to 72 serves as a coordination point for GTP; the sequence is GSQSTGKS. A helical transmembrane segment spans residues 693-713; it reads IPYYIYLIILVLGWNEFMAII. The Lumenal portion of the chain corresponds to 714–716; it reads RNP. A helical transmembrane segment spans residues 717–737; it reads LFFSLSIVLGATVYVLYYLGL. The Cytoplasmic portion of the chain corresponds to 738–790; sequence LRPALVVAQRTMDEVIVMAKTKLREVLIDDHEVTGRQLNKMAGSKENIELDDM.

It belongs to the TRAFAC class dynamin-like GTPase superfamily. GB1/RHD3 GTPase family. RHD3 subfamily.

It is found in the endoplasmic reticulum membrane. Its function is as follows. Cooperates with the reticulon proteins and tubule-shaping DP1 family proteins to generate and maintain the structure of the tubular endoplasmic reticulum network. Has GTPase activity, which is required for its function in ER organization. Required for virulence and resistance to cycloheximide. The chain is Protein SEY1 from Candida albicans (strain SC5314 / ATCC MYA-2876) (Yeast).